The following is a 161-amino-acid chain: MQLSALIEKTVVGMGYELVNFEQAARGLVRVFIDFTPEDADKGAITVEDCEKVTHQLLHVLTVENANYERLEVSSPGLDRPLKKLSDYVRFAGAEALVKLRMPMPNAANRKSFQGILQEPVGETLALEFEGNDGPAKLEFTLADVDKAHLVPQVNFRSRKA.

The protein belongs to the RimP family.

Its subcellular location is the cytoplasm. Its function is as follows. Required for maturation of 30S ribosomal subunits. The protein is Ribosome maturation factor RimP of Janthinobacterium sp. (strain Marseille) (Minibacterium massiliensis).